The sequence spans 695 residues: RING finger protein 145 (695 aa).

Helical transmembrane passes span 53–73, 77–97, 123–143, 146–166, 168–188, 225–245, 275–295, 316–336, 340–360, 384–404, 410–430, 460–480, and 482–502; these read YLALNMHYVGYILSVVLLTLP, LAKLYLYFVAALLLYAGHQIS, FITALVGQLVVCTLCSCVMKT, IWLFSAHMLPLLARLCLVPIE, IVVINKFAMIFTGLEVLYFLA, LVVPVLFMVFWLVLFALQIYT, YSLLGLVFTVSFVALGVLTLC, TEGVTLLILAVQTGLIELQVV, FLLSIILFIVVASILQSMLEI, SLCLFLLVFPSYMAYMICQFF, LLIIISSSILTSLQVLGTLFI, LLEFLVALCVVAYGVSETVFG, and WTVMGSMIIFIHSYYNVWLRA. The RING-type; atypical zinc finger occupies 537 to 575; sequence CSICYQDMNSAVITPCSHFFHPGCLKKWLYVQETCPLCH. The span at 585–603 shows a compositional bias: polar residues; sequence ATGESGSSTNPVSEQSATN. A disordered region spans residues 585 to 610; it reads ATGESGSSTNPVSEQSATNPPLGPVS.

Its subcellular location is the membrane. The polypeptide is RING finger protein 145 (rnf145) (Xenopus tropicalis (Western clawed frog)).